A 195-amino-acid polypeptide reads, in one-letter code: Probable nicotinate-nucleotide adenylyltransferase (195 aa).

Belongs to the NadD family.

The catalysed reaction is nicotinate beta-D-ribonucleotide + ATP + H(+) = deamido-NAD(+) + diphosphate. Its pathway is cofactor biosynthesis; NAD(+) biosynthesis; deamido-NAD(+) from nicotinate D-ribonucleotide: step 1/1. Functionally, catalyzes the reversible adenylation of nicotinate mononucleotide (NaMN) to nicotinic acid adenine dinucleotide (NaAD). The chain is Probable nicotinate-nucleotide adenylyltransferase from Chlorobaculum tepidum (strain ATCC 49652 / DSM 12025 / NBRC 103806 / TLS) (Chlorobium tepidum).